The following is a 148-amino-acid chain: Major microfilarial sheath protein (148 aa).

The N-terminal stretch at 1 to 18 (MCCKAILSFCILSSLGNA) is a signal peptide. The propeptide at 19-43 (LYFGSHRPQYLREVGQRQYPFEPQA) is removed in mature form. 5 repeats span residues 46 to 50 (MLPVP), 54 to 58 (MGPQP), 59 to 63 (MGPQP), 64 to 68 (MEPQP), and 71 to 75 (MGPQS). The tract at residues 46 to 75 (MLPVPQQPMGPQPMGPQPMEPQPLPMGPQS) is repeat-rich region. Pro residues predominate over residues 52 to 73 (QPMGPQPMGPQPMEPQPLPMGP). Residues 52–80 (QPMGPQPMGPQPMEPQPLPMGPQSPQMQV) form a disordered region.

The protein to B.pahangi filarial sheath protein. Post-translationally, O-glycosylated.

This is Major microfilarial sheath protein (GP22) from Litomosoides carinii.